The following is a 69-amino-acid chain: Small integral membrane protein 20 (69 aa).

Over 1-8 the chain is Mitochondrial matrix; it reads MAAARNLR. A helical transmembrane segment spans residues 9–29; sequence TALIFGGFISMVGAAFYPIYF. Topologically, residues 30–69 are mitochondrial intermembrane; it reads RPLMRLEEYQKEQAVNRAGIVQEDVQPPGLKVWSDPFGRK. F66 is subject to Phenylalanine amide.

Component of the MITRAC (mitochondrial translation regulation assembly intermediate of cytochrome c oxidase complex) complex, the core components of this complex being COA3/MITRAC12 and COX14. Interacts with COA3/MITRAC12 and COX4I1. Directly interacts with newly synthesized MT-CO1/COX1. As to expression, highly expressed in the hypothalamus, the spinal cord, and sensory ganglia (at protein level). Also expressed on in the epidermis and dermis layers of the skin (at protein level). Expressed in preadipocytes and adipocytes (at protein level). Expressed in the ovary, specifically in granulosa cells of follicles that have passed the primary stage and in oocytes (at protein level).

Its subcellular location is the mitochondrion inner membrane. It localises to the secreted. In terms of biological role, component of the MITRAC (mitochondrial translation regulation assembly intermediate of cytochrome c oxidase complex) complex, that regulates cytochrome c oxidase assembly. Promotes the progression of complex assembly after the association of MT-CO1/COX1 with COX4I1 and COX6C. Chaperone-like assembly factor required to stabilize newly synthesized MT-CO1/COX1 and to prevent its premature turnover. Its function is as follows. Peptide involved in a broad spectrum of regulatory functions. Is a ligand for GPR173. As part of the reproductive cycle, it regulates gonadotropin-releasing hormone (GnRH) signaling in the hypothalamus and pituitary gland which augments the release of luteinizing hormone. More specifically, it regulates the expression of transcription factors CEBPB and POU2F1/OCT1 through the cAMP-PKA signaling pathway, which subsequently regulate the expression of GNRHR and KISS1. Plays a protective role in memory retention through activation of GNRHR. Regulates the secretion of AVP by hypothalamic neurons. Plays a role in the transduction of the itch sensation. Induces anxiolytic effects, reducing behavior associated with anxiety. Regulates food intake as well as satiation and satiety by increasing Nucb2 expression in neurons. In the ovary, it regulates follicular growth by stimulating granulosa cell proliferation by increasing the expression of GPR173, CREB1, CYP19A1, KITLG, FSHR, and LHCGR. It also increases the production of estradiol (E2). In the heart, it regulates contractility and relaxation by activating the AKT1-NOS3 and MAPK1-MAPK3 signaling pathways. It also plays a cardioprotective role during ischemia, where it activates the SAFE and RISK pathways. Stimulates the proliferation and differentiation of preadipocytes. In pancreatic islet cells, it induces proliferation of islet cells as well as the production of INS through activation of the MAPK1-MAPK3 signaling pathways. This Mus musculus (Mouse) protein is Small integral membrane protein 20.